A 486-amino-acid polypeptide reads, in one-letter code: Cardiolipin synthase A (486 aa).

Transmembrane regions (helical) follow at residues 3–23 and 38–58; these read TVYT…IAGV and MAWL…YLAV. PLD phosphodiesterase domains lie at 219 to 246 and 399 to 426; these read MDLR…VDPR and EGGL…DMRS. Catalysis depends on residues H224, K226, D231, H404, K406, and D411.

The protein belongs to the phospholipase D family. Cardiolipin synthase subfamily. ClsA sub-subfamily.

The protein resides in the cell inner membrane. The catalysed reaction is 2 a 1,2-diacyl-sn-glycero-3-phospho-(1'-sn-glycerol) = a cardiolipin + glycerol. In terms of biological role, catalyzes the reversible phosphatidyl group transfer from one phosphatidylglycerol molecule to another to form cardiolipin (CL) (diphosphatidylglycerol) and glycerol. The chain is Cardiolipin synthase A from Shigella dysenteriae serotype 1 (strain Sd197).